We begin with the raw amino-acid sequence, 335 residues long: UPF0353 protein Mflv_3659 (335 aa).

2 helical membrane-spanning segments follow: residues 18-38 (WFFL…VVQL) and 67-87 (LPAV…AGPT). In terms of domain architecture, VWFA spans 98 to 294 (VVMLVIDVSQ…EQLKQVFTNL (197 aa)). A helical transmembrane segment spans residues 309–329 (VGWLRLGAGVLALAALGALLI).

This sequence belongs to the UPF0353 family.

It is found in the cell membrane. In Mycolicibacterium gilvum (strain PYR-GCK) (Mycobacterium gilvum (strain PYR-GCK)), this protein is UPF0353 protein Mflv_3659.